Reading from the N-terminus, the 427-residue chain is Glutamate-1-semialdehyde 2,1-aminomutase (427 aa).

The residue at position 267 (Lys267) is an N6-(pyridoxal phosphate)lysine.

The protein belongs to the class-III pyridoxal-phosphate-dependent aminotransferase family. HemL subfamily. In terms of assembly, homodimer. It depends on pyridoxal 5'-phosphate as a cofactor.

The protein resides in the cytoplasm. It carries out the reaction (S)-4-amino-5-oxopentanoate = 5-aminolevulinate. It participates in porphyrin-containing compound metabolism; protoporphyrin-IX biosynthesis; 5-aminolevulinate from L-glutamyl-tRNA(Glu): step 2/2. The chain is Glutamate-1-semialdehyde 2,1-aminomutase from Geotalea uraniireducens (strain Rf4) (Geobacter uraniireducens).